The chain runs to 314 residues: DNA-directed RNA polymerase subunit alpha (314 aa).

The interval 1 to 228 (MIEFEKPKIH…EHLAIFVNLN (228 aa)) is alpha N-terminal domain (alpha-NTD). The interval 245–314 (KEKMLEMTIE…LLGLGFRSED (70 aa)) is alpha C-terminal domain (alpha-CTD).

This sequence belongs to the RNA polymerase alpha chain family. Homodimer. The RNAP catalytic core consists of 2 alpha, 1 beta, 1 beta' and 1 omega subunit. When a sigma factor is associated with the core the holoenzyme is formed, which can initiate transcription.

It catalyses the reaction RNA(n) + a ribonucleoside 5'-triphosphate = RNA(n+1) + diphosphate. In terms of biological role, DNA-dependent RNA polymerase catalyzes the transcription of DNA into RNA using the four ribonucleoside triphosphates as substrates. This chain is DNA-directed RNA polymerase subunit alpha, found in Pediococcus pentosaceus (strain ATCC 25745 / CCUG 21536 / LMG 10740 / 183-1w).